Consider the following 1100-residue polypeptide: Guanylate cyclase 2G (1100 aa).

The N-terminal stretch at 1–43 (MASRARSEPPLEHRFYGGAESHAGHSSLVLTLFVVMLMTCLEA) is a signal peptide. The Extracellular portion of the chain corresponds to 44-481 (AKLTVGFHAP…GAGMTASVTA (438 aa)). Residues N55, N85, N94, N418, and N443 are each glycosylated (N-linked (GlcNAc...) asparagine). Residues 482-502 (VIPTVTLLVVASAAAITGLML) form a helical membrane-spanning segment. Residues 503-1100 (WRLRGKVQNH…EEEAKVPEIL (598 aa)) are Cytoplasmic-facing. Residues 549 to 826 (STVKISADCG…PAFPSIKKTL (278 aa)) form the Protein kinase domain. The 131-residue stretch at 901–1031 (TIFFSDIVGF…DTVNMASRME (131 aa)) folds into the Guanylate cyclase domain.

It belongs to the adenylyl cyclase class-4/guanylyl cyclase family. As to quaternary structure, homooligomer. May interact with NPR1/GC-A. In terms of processing, N-glycosylated. As to expression, expressed in lung, kidney and skeletal muscle. Low levels in intestine.

It is found in the cell membrane. The protein resides in the cytoplasm. It carries out the reaction GTP = 3',5'-cyclic GMP + diphosphate. In Rattus norvegicus (Rat), this protein is Guanylate cyclase 2G (Gucy2g).